Consider the following 237-residue polypeptide: 2,3,4,5-tetrahydropyridine-2,6-dicarboxylate N-acetyltransferase (237 aa).

This sequence belongs to the transferase hexapeptide repeat family. DapH subfamily.

The enzyme catalyses (S)-2,3,4,5-tetrahydrodipicolinate + acetyl-CoA + H2O = L-2-acetamido-6-oxoheptanedioate + CoA. It participates in amino-acid biosynthesis; L-lysine biosynthesis via DAP pathway; LL-2,6-diaminopimelate from (S)-tetrahydrodipicolinate (acetylase route): step 1/3. Functionally, catalyzes the transfer of an acetyl group from acetyl-CoA to tetrahydrodipicolinate. This chain is 2,3,4,5-tetrahydropyridine-2,6-dicarboxylate N-acetyltransferase, found in Alkaliphilus metalliredigens (strain QYMF).